The sequence spans 379 residues: Sulfate adenylyltransferase (379 aa).

The protein belongs to the sulfate adenylyltransferase family.

It catalyses the reaction sulfate + ATP + H(+) = adenosine 5'-phosphosulfate + diphosphate. Its pathway is sulfur metabolism; hydrogen sulfide biosynthesis; sulfite from sulfate: step 1/3. The protein is Sulfate adenylyltransferase (sat) of Pyrococcus abyssi (strain GE5 / Orsay).